Here is a 226-residue protein sequence, read N- to C-terminus: Protein B (226 aa).

Residues 37–100 (DNVQGTDYEK…FSTQHLANKV (64 aa)) are igG constant region-binding. 3 consecutive repeats follow at residues 158–168 (TKSKLDKEIWN), 169–179 (TRFTRDKKVLN), and 180–190 (VKEFKVYNTLN).

The protein localises to the secreted. Protein B belongs to the group of bacterial Fc-binding protein. This chain is Protein B, found in Streptococcus agalactiae.